A 188-amino-acid polypeptide reads, in one-letter code: Large ribosomal subunit protein eL18z (188 aa).

This sequence belongs to the eukaryotic ribosomal protein eL18 family.

This Arabidopsis thaliana (Mouse-ear cress) protein is Large ribosomal subunit protein eL18z (RPL18A).